A 263-amino-acid chain; its full sequence is MKPMTMTDLNQLKKEKRKFATITAYDASFAHLFAEQGIDVMLVGDSLGMTVQGADTTIPVTVEDIVYHTRCVRAGTPYTFIIADMPFMSYATPEQSCENAAKLMRAGANMVKLEGGSWLYDTINMLTERSVPVCAHLGLTPQSVHILGGYKVQGRDEVSANQLIKDAITLEKAGIQLLVLECVPVDLAKRITDELQIPVIGIGAGNVTDGQVLVMHDTLGITVSPPKFVKNFLEEAGNIRDAIRLYKEQVESGIYPGKEHSFY.

Mg(2+) is bound by residues aspartate 45 and aspartate 84. 3-methyl-2-oxobutanoate is bound by residues 45-46 (DS), aspartate 84, and lysine 112. Residue glutamate 114 coordinates Mg(2+). Catalysis depends on glutamate 181, which acts as the Proton acceptor.

The protein belongs to the PanB family. Homodecamer; pentamer of dimers. Mg(2+) is required as a cofactor.

The protein localises to the cytoplasm. It carries out the reaction 3-methyl-2-oxobutanoate + (6R)-5,10-methylene-5,6,7,8-tetrahydrofolate + H2O = 2-dehydropantoate + (6S)-5,6,7,8-tetrahydrofolate. The protein operates within cofactor biosynthesis; (R)-pantothenate biosynthesis; (R)-pantoate from 3-methyl-2-oxobutanoate: step 1/2. Its function is as follows. Catalyzes the reversible reaction in which hydroxymethyl group from 5,10-methylenetetrahydrofolate is transferred onto alpha-ketoisovalerate to form ketopantoate. The chain is 3-methyl-2-oxobutanoate hydroxymethyltransferase from Photorhabdus laumondii subsp. laumondii (strain DSM 15139 / CIP 105565 / TT01) (Photorhabdus luminescens subsp. laumondii).